Reading from the N-terminus, the 295-residue chain is Mediator of RNA polymerase II transcription subunit 6 (295 aa).

The interval 211–243 (TATAATNGNNAGGGSNKSSVRPTGGANMATVPS) is disordered. Ser225 is modified (phosphoserine).

The protein belongs to the Mediator complex subunit 6 family. Component of the Mediator complex, which is composed of at least 21 subunits that form three structurally distinct submodules. The Mediator head module contains MED6, MED8, MED11, SRB4/MED17, SRB5/MED18, ROX3/MED19, SRB2/MED20 and SRB6/MED22, the middle module contains MED1, MED4, NUT1/MED5, MED7, CSE2/MED9, NUT2/MED10, SRB7/MED21 and SOH1/MED31, and the tail module contains MED2, PGD1/MED3, RGR1/MED14, GAL11/MED15 and SIN4/MED16. The head and the middle modules interact directly with RNA polymerase II, whereas the elongated tail module interacts with gene-specific regulatory proteins. MED6 interacts directly with SRB4/MED17 and SRB7/MED21.

The protein localises to the nucleus. Its function is as follows. Component of the Mediator complex, a coactivator involved in the regulated transcription of nearly all RNA polymerase II-dependent genes. Mediator functions as a bridge to convey information from gene-specific regulatory proteins to the basal RNA polymerase II transcription machinery. The Mediator complex, having a compact conformation in its free form, is recruited to promoters by direct interactions with regulatory proteins and serves for the assembly of a functional preinitiation complex with RNA polymerase II and the general transcription factors. The Mediator complex unfolds to an extended conformation and partially surrounds RNA polymerase II, specifically interacting with the unphosphorylated form of the C-terminal domain (CTD) of RNA polymerase II. The Mediator complex dissociates from the RNA polymerase II holoenzyme and stays at the promoter when transcriptional elongation begins. This chain is Mediator of RNA polymerase II transcription subunit 6 (MED6), found in Saccharomyces cerevisiae (strain ATCC 204508 / S288c) (Baker's yeast).